The primary structure comprises 379 residues: Multicilin (379 aa).

Disordered regions lie at residues 26–46 (SRRS…PWKS) and 87–106 (LLGT…NPSL). The stretch at 175 to 223 (EQYWKEVADQNQRALGTALIENNQLHVTLTQKQEEIASLRERNVQLKEL) forms a coiled coil. Residues 289 to 309 (LQNRDPKRPRLQQEPDSKDCS) show a composition bias toward basic and acidic residues. The interval 289–311 (LQNRDPKRPRLQQEPDSKDCSTR) is disordered.

It belongs to the geminin family. In terms of assembly, heterodimer (via coiled-coil domain) with GMNN (via coiled-coil domain); targets GMNN to the nucleus. Can form homodimers (in vitro, via coiled-coil domain), but these are much less stable than the heterodimer formed with GMNN.

Its subcellular location is the nucleus. Transcription regulator specifically required for multiciliate cell differentiation. Acts in a multiprotein complex containing E2F4 and E2F5 that binds and activates genes required for centriole biogenesis. Required for the deuterosome-mediated acentriolar pathway. Plays a role in mitotic cell cycle progression by promoting cell cycle exit. Modulates GMNN activity by reducing its affinity for CDT1. In Rattus norvegicus (Rat), this protein is Multicilin (Mcidas).